We begin with the raw amino-acid sequence, 331 residues long: Centriolar satellite-associated tubulin polyglutamylase complex regulator 1 (331 aa).

The tract at residues 1–111 (MLSPERLALP…HCLLQLLCPD (111 aa)) is required for interaction with PCM1. A required for interaction with TPGS1, LRRC49, and TTLL1 region spans residues 1-225 (MLSPERLALP…SCPPPALVKE (225 aa)). Residues 112-331 (FPLELTQKAA…STEETDESET (220 aa)) form a required for interaction with TPGS2 region. A disordered region spans residues 292–331 (SCLPSRTPPRVGSPWKPLHRSRKLDAESDGSTEETDESET). Residues 318 to 331 (ESDGSTEETDESET) show a composition bias toward acidic residues. The residue at position 319 (serine 319) is a Phosphoserine.

It belongs to the CSTPP1 family. In terms of assembly, interacts with PCM1. Interacts with TTLL1, TPGS1, TPGS2 and LRRC49; the interactions link CSTPP1 to the complex TPGC. Binds to alpha-tubulin.

It is found in the cytoplasm. It localises to the cytoskeleton. Its subcellular location is the microtubule organizing center. The protein resides in the centrosome. The protein localises to the centriolar satellite. Regulator of the tubulin polyglutamylase complex (TPGC) that controls cytoskeletal organization, nuclear shape, and cilium disassembly by balancing microtubule and actin assembly. Regulates the assembly and stability of the TPGC and thereby modulates polyglutamylation of the microtubule, which antagonizes MAP4 binding. The polypeptide is Centriolar satellite-associated tubulin polyglutamylase complex regulator 1 (Mus musculus (Mouse)).